Here is a 95-residue protein sequence, read N- to C-terminus: Aspartyl/glutamyl-tRNA(Asn/Gln) amidotransferase subunit C (95 aa).

It belongs to the GatC family. Heterotrimer of A, B and C subunits.

It carries out the reaction L-glutamyl-tRNA(Gln) + L-glutamine + ATP + H2O = L-glutaminyl-tRNA(Gln) + L-glutamate + ADP + phosphate + H(+). It catalyses the reaction L-aspartyl-tRNA(Asn) + L-glutamine + ATP + H2O = L-asparaginyl-tRNA(Asn) + L-glutamate + ADP + phosphate + 2 H(+). In terms of biological role, allows the formation of correctly charged Asn-tRNA(Asn) or Gln-tRNA(Gln) through the transamidation of misacylated Asp-tRNA(Asn) or Glu-tRNA(Gln) in organisms which lack either or both of asparaginyl-tRNA or glutaminyl-tRNA synthetases. The reaction takes place in the presence of glutamine and ATP through an activated phospho-Asp-tRNA(Asn) or phospho-Glu-tRNA(Gln). The sequence is that of Aspartyl/glutamyl-tRNA(Asn/Gln) amidotransferase subunit C from Allorhizobium ampelinum (strain ATCC BAA-846 / DSM 112012 / S4) (Agrobacterium vitis (strain S4)).